We begin with the raw amino-acid sequence, 88 residues long: Defensin-like protein 267 (88 aa).

The N-terminal stretch at 1–23 (MMLSKVVLLALLLSLSCLWVAKA) is a signal peptide. 3 cysteine pairs are disulfide-bonded: cysteine 45-cysteine 63, cysteine 51-cysteine 68, and cysteine 55-cysteine 70.

The protein belongs to the DEFL family.

The protein resides in the secreted. The polypeptide is Defensin-like protein 267 (Arabidopsis thaliana (Mouse-ear cress)).